Consider the following 299-residue polypeptide: Oxygen-dependent coproporphyrinogen-III oxidase (299 aa).

Serine 92 provides a ligand contact to substrate. The Mn(2+) site is built by histidine 96 and histidine 106. The Proton donor role is filled by histidine 106. 108 to 110 is a substrate binding site; sequence NVR. Positions 145 and 175 each coordinate Mn(2+). The tract at residues 240–275 is important for dimerization; that stretch reads YVEFNLVWDRGTLFGLQTGGRTESILMSMPPLVRWE. 258–260 is a binding site for substrate; that stretch reads GGR.

Belongs to the aerobic coproporphyrinogen-III oxidase family. In terms of assembly, homodimer. It depends on Mn(2+) as a cofactor.

It is found in the cytoplasm. It catalyses the reaction coproporphyrinogen III + O2 + 2 H(+) = protoporphyrinogen IX + 2 CO2 + 2 H2O. It participates in porphyrin-containing compound metabolism; protoporphyrin-IX biosynthesis; protoporphyrinogen-IX from coproporphyrinogen-III (O2 route): step 1/1. Its function is as follows. Involved in the heme biosynthesis. Catalyzes the aerobic oxidative decarboxylation of propionate groups of rings A and B of coproporphyrinogen-III to yield the vinyl groups in protoporphyrinogen-IX. The sequence is that of Oxygen-dependent coproporphyrinogen-III oxidase from Escherichia coli (strain SE11).